A 468-amino-acid chain; its full sequence is MMAATAAAQVRAGTRWAPALCRMPWLPLMLVAAAAATSEQQVPLVLWSSDRGLWAPAADTHEGHITSDMQLSTYLDPALELGPRNVLLFLQDKLSIEDFTAYGGVFGNKQDSAFSNLENALDLAPSSLVLPAVDWYAISTLTTYLQEKLGASPLHVDLATLQELKLNASIPALLLIRLPYTASSGLMAPKEVLMGNDEVIGQVLSTLKSEDIPYTAALTAVRPSRVARDVAMVTGGLGRQLLQRTVVPPTMNVPVSYNDSYDTRILFWAQNFSVAYGEHWEDLTSRTFGVQDLNLTGSFWNDTVARLVLTYDSLFGTMVTFKFILANSYYSVSARHWFTLENLEIHSNGSVAYFNASQVTGPSIYSFHCEHVSSENEDGNLLVPDTQPSLWQMTFRDFQIQAFNVTDKKFSYASDCAGFFSPGIWMGLLTSLFMLFIFTYGLHMILSLKTMDRFDDHKGPTITLTQIV.

Positions 1–35 are cleaved as a signal peptide; that stretch reads MMAATAAAQVRAGTRWAPALCRMPWLPLMLVAAAA. Residues 36 to 228 constitute a propeptide that is removed on maturation; it reads ATSEQQVPLV…TAVRPSRVAR (193 aa). The Lumenal segment spans residues 36 to 417; that stretch reads ATSEQQVPLV…KKFSYASDCA (382 aa). N-linked (GlcNAc...) asparagine glycans are attached at residues N167, N258, N271, N294, N301, N348, N355, and N404. C369 and C416 are joined by a disulfide. Residues 418–438 form a helical membrane-spanning segment; the sequence is GFFSPGIWMGLLTSLFMLFIF. Residues 439-468 lie on the Cytoplasmic side of the membrane; the sequence is TYGLHMILSLKTMDRFDDHKGPTITLTQIV.

The protein belongs to the vacuolar ATPase subunit S1 family. Accessory component of the multisubunit proton-transporting vacuolar (V)-ATPase protein pump. Interacts (via N-terminus) with ATP6AP2 (via N-terminus). Interacts with RNASEK. Interacts with TMEM106B (via C-terminus). In terms of processing, N-glycosylated.

It is found in the endoplasmic reticulum membrane. It localises to the endoplasmic reticulum-Golgi intermediate compartment membrane. Its subcellular location is the cytoplasmic vesicle. The protein resides in the secretory vesicle. The protein localises to the synaptic vesicle membrane. It is found in the clathrin-coated vesicle membrane. Functionally, accessory subunit of the proton-transporting vacuolar (V)-ATPase protein pump, which is required for luminal acidification of secretory vesicles. Guides the V-type ATPase into specialized subcellular compartments, such as neuroendocrine regulated secretory vesicles or the ruffled border of the osteoclast, thereby regulating its activity. Involved in membrane trafficking and Ca(2+)-dependent membrane fusion. May play a role in the assembly of the V-type ATPase complex. In aerobic conditions, involved in intracellular iron homeostasis, thus triggering the activity of Fe(2+) prolyl hydroxylase (PHD) enzymes, and leading to HIF1A hydroxylation and subsequent proteasomal degradation. In islets of Langerhans cells, may regulate the acidification of dense-core secretory granules. This chain is V-type proton ATPase subunit S1 (ATP6AP1), found in Bos taurus (Bovine).